Reading from the N-terminus, the 596-residue chain is Proline--tRNA ligase (596 aa).

The protein belongs to the class-II aminoacyl-tRNA synthetase family. ProS type 1 subfamily. Homodimer.

It localises to the cytoplasm. It carries out the reaction tRNA(Pro) + L-proline + ATP = L-prolyl-tRNA(Pro) + AMP + diphosphate. Its function is as follows. Catalyzes the attachment of proline to tRNA(Pro) in a two-step reaction: proline is first activated by ATP to form Pro-AMP and then transferred to the acceptor end of tRNA(Pro). As ProRS can inadvertently accommodate and process non-cognate amino acids such as alanine and cysteine, to avoid such errors it has two additional distinct editing activities against alanine. One activity is designated as 'pretransfer' editing and involves the tRNA(Pro)-independent hydrolysis of activated Ala-AMP. The other activity is designated 'posttransfer' editing and involves deacylation of mischarged Ala-tRNA(Pro). The misacylated Cys-tRNA(Pro) is not edited by ProRS. This chain is Proline--tRNA ligase, found in Prochlorococcus marinus (strain NATL1A).